The following is a 309-amino-acid chain: Malate dehydrogenase (309 aa).

Residues 9–14 (GAGFVG) and Asp-33 contribute to the NAD(+) site. The substrate site is built by Arg-82 and Arg-88. Residues Asn-95 and 118–120 (VNN) contribute to the NAD(+) site. Substrate contacts are provided by Asn-120 and Arg-151. The active-site Proton acceptor is the His-175.

The protein belongs to the LDH/MDH superfamily. MDH type 3 family.

The enzyme catalyses (S)-malate + NAD(+) = oxaloacetate + NADH + H(+). Its function is as follows. Catalyzes the reversible oxidation of malate to oxaloacetate. This chain is Malate dehydrogenase, found in Chloroflexus aggregans (strain MD-66 / DSM 9485).